A 334-amino-acid polypeptide reads, in one-letter code: DNA-directed RNA polymerase subunit alpha (334 aa).

The tract at residues 1 to 234 (MQRSLNEFLT…QQLAVFVDFD (234 aa)) is alpha N-terminal domain (alpha-NTD). The tract at residues 248 to 334 (IDPILLRPVD…IRGDDRVLGG (87 aa)) is alpha C-terminal domain (alpha-CTD).

Belongs to the RNA polymerase alpha chain family. Homodimer. The RNAP catalytic core consists of 2 alpha, 1 beta, 1 beta' and 1 omega subunit. When a sigma factor is associated with the core the holoenzyme is formed, which can initiate transcription.

It catalyses the reaction RNA(n) + a ribonucleoside 5'-triphosphate = RNA(n+1) + diphosphate. In terms of biological role, DNA-dependent RNA polymerase catalyzes the transcription of DNA into RNA using the four ribonucleoside triphosphates as substrates. This is DNA-directed RNA polymerase subunit alpha from Hahella chejuensis (strain KCTC 2396).